We begin with the raw amino-acid sequence, 96 residues long: Protein RnfH (96 aa).

The protein belongs to the UPF0125 (RnfH) family.

The chain is Protein RnfH from Escherichia coli O17:K52:H18 (strain UMN026 / ExPEC).